A 233-amino-acid polypeptide reads, in one-letter code: Cysteine-rich venom protein (233 aa).

The N-terminal stretch at 1 to 12 (PILAAVLQQSSG) is a signal peptide. The region spanning 31–159 (VDLHNSLRRS…PYSYFFVCQY (129 aa)) is the SCP domain. 8 disulfide bridges follow: Cys-68/Cys-146, Cys-85/Cys-160, Cys-141/Cys-157, Cys-179/Cys-186, Cys-182/Cys-191, Cys-195/Cys-228, Cys-204/Cys-222, and Cys-213/Cys-226. A ShKT domain is found at 195-228 (CTRENKFTNCNTMVQQSSCQDNYMKTNCPASCFC).

This sequence belongs to the CRISP family. In terms of tissue distribution, expressed by the venom gland.

The protein localises to the secreted. In terms of biological role, blocks contraction of smooth muscle elicited by high potassium-induced depolarization, but does not block caffeine-stimulated contraction. May target voltage-gated calcium channels on smooth muscle. In Trimeresurus stejnegeri (Chinese green tree viper), this protein is Cysteine-rich venom protein.